The following is a 427-amino-acid chain: Adenylosuccinate synthetase (427 aa).

GTP contacts are provided by residues 12 to 18 and 40 to 42; these read GDEGKGK and GHT. The active-site Proton acceptor is aspartate 13. Mg(2+) contacts are provided by aspartate 13 and glycine 40. IMP contacts are provided by residues 13–16, 38–41, threonine 128, arginine 142, glutamine 223, threonine 238, and arginine 302; these read DEGK and NAGH. Histidine 41 (proton donor) is an active-site residue. 298–304 contacts substrate; it reads TTTGRPR. GTP is bound by residues arginine 304, 330-332, and 412-414; these read SID and SVG.

This sequence belongs to the adenylosuccinate synthetase family. Homodimer. Requires Mg(2+) as cofactor.

Its subcellular location is the cytoplasm. It catalyses the reaction IMP + L-aspartate + GTP = N(6)-(1,2-dicarboxyethyl)-AMP + GDP + phosphate + 2 H(+). It participates in purine metabolism; AMP biosynthesis via de novo pathway; AMP from IMP: step 1/2. Functionally, plays an important role in the de novo pathway of purine nucleotide biosynthesis. Catalyzes the first committed step in the biosynthesis of AMP from IMP. This is Adenylosuccinate synthetase from Staphylococcus saprophyticus subsp. saprophyticus (strain ATCC 15305 / DSM 20229 / NCIMB 8711 / NCTC 7292 / S-41).